We begin with the raw amino-acid sequence, 294 residues long: MLERLSTEYRNKNTMNLDEMSIKEVLEAMNQEDRKVAIAVHKEMEQIEKIVRNVISSFQNGGRLIYIGAGTSGRLGILDAVECPPTFGTDERQVQGFIAGGMKAFTKAVEGAEDCEELAIEDLKGIQLNDKDTVIGIAASGRTPYVIGGLKYANYVGAKTASISCNKGAEMSQLAQVSVEVETGAEVLTGSTRLKAGTAQKLVLNMISTASMIGIGKVYKNLMVDVQSTNQKLVERSKRIIMEATEVDYKEAEAYYEKANRNVKAAIVMILLQCEYGEALEKLKDAKGFVKKAL.

The SIS domain maps to 54-217; it reads VISSFQNGGR…STASMIGIGK (164 aa). The Proton donor role is filled by glutamate 82. Residue glutamate 113 is part of the active site.

This sequence belongs to the GCKR-like family. MurNAc-6-P etherase subfamily. Homodimer.

The catalysed reaction is N-acetyl-D-muramate 6-phosphate + H2O = N-acetyl-D-glucosamine 6-phosphate + (R)-lactate. Its pathway is amino-sugar metabolism; N-acetylmuramate degradation. Functionally, specifically catalyzes the cleavage of the D-lactyl ether substituent of MurNAc 6-phosphate, producing GlcNAc 6-phosphate and D-lactate. In Bacillus cytotoxicus (strain DSM 22905 / CIP 110041 / 391-98 / NVH 391-98), this protein is N-acetylmuramic acid 6-phosphate etherase.